A 427-amino-acid polypeptide reads, in one-letter code: Serine--tRNA ligase (427 aa).

235–237 (TAE) is a binding site for L-serine. ATP-binding positions include 266-268 (RRE) and V282. L-serine is bound at residue E289. 353–356 (EASS) is a binding site for ATP. Residue S389 coordinates L-serine.

It belongs to the class-II aminoacyl-tRNA synthetase family. Type-1 seryl-tRNA synthetase subfamily. As to quaternary structure, homodimer. The tRNA molecule binds across the dimer.

It is found in the cytoplasm. The catalysed reaction is tRNA(Ser) + L-serine + ATP = L-seryl-tRNA(Ser) + AMP + diphosphate + H(+). The enzyme catalyses tRNA(Sec) + L-serine + ATP = L-seryl-tRNA(Sec) + AMP + diphosphate + H(+). It functions in the pathway aminoacyl-tRNA biosynthesis; selenocysteinyl-tRNA(Sec) biosynthesis; L-seryl-tRNA(Sec) from L-serine and tRNA(Sec): step 1/1. In terms of biological role, catalyzes the attachment of serine to tRNA(Ser). Is also able to aminoacylate tRNA(Sec) with serine, to form the misacylated tRNA L-seryl-tRNA(Sec), which will be further converted into selenocysteinyl-tRNA(Sec). This Chlorobium phaeobacteroides (strain BS1) protein is Serine--tRNA ligase.